Here is an 875-residue protein sequence, read N- to C-terminus: Metal transporter CNNM2 (875 aa).

Residues 1 to 250 (MIGCGACEPE…TKMIVGEEKK (250 aa)) are Extracellular-facing. N-linked (GlcNAc...) asparagine glycosylation is present at Asn-112. The disordered stretch occupies residues 121–149 (TEHERRRHTPSERGLGGPAPPEPDSGPQR). A helical transmembrane segment spans residues 251–271 (FLLPFWLQVIFISLLLCLSGM). The CNNM transmembrane domain occupies 251–431 (FLLPFWLQVI…DPYNDLVKEE (181 aa)). Topologically, residues 272 to 313 (FSGLNLGLMALDPMELRIVQNCGTEKEKNYAKRIEPVRRQGN) are cytoplasmic. The helical intramembrane region spans 314-334 (YLLCSLLLGNVLVNTTLTILL). Over 335–338 (DDIA) the chain is Cytoplasmic. A helical transmembrane segment spans residues 339 to 359 (GSGLVAVVVSTIGIVIFGEIV). The Extracellular segment spans residues 360 to 368 (PQAICSRHG). Residues 369-389 (LAVGANTIFLTKFFMMMTFPA) form a helical membrane-spanning segment. The Cytoplasmic portion of the chain corresponds to 390–875 (SYPVSKLLDC…NHSLHSEGAI (486 aa)). CBS domains are found at residues 450–511 (MTPL…CTPL) and 518–584 (YNHP…ILDE). The tract at residues 741–763 (AGSPGENKSPPRPCGLNHSDSLS) is disordered. The residue at position 761 (Ser-761) is a Phosphoserine.

This sequence belongs to the ACDP family. Isoform 1 and isoform 2 may interact with each other. The N-terminus is cleaved within the endoplasmic reticulum. The signal peptidase complex seems to be involved in the processing, but the exact cleavage site has not been identified. As to expression, widely expressed, with highest levels in kidney, lung, spleen and testis. In the kidney, predominantly expressed in the distal convoluted tubule and, at lower levels, in the connecting tubule (at protein level).

It localises to the cell membrane. Divalent metal cation transporter. Mediates transport of divalent metal cations in an order of Mg(2+) &gt; Co(2+) &gt; Mn(2+) &gt; Sr(2+) &gt; Ba(2+) &gt; Cu(2+) &gt; Fe(2+). This Mus musculus (Mouse) protein is Metal transporter CNNM2 (Cnnm2).